The sequence spans 514 residues: Probable endopolygalacturonase D (514 aa).

A signal peptide spans 1–16 (MKRCALLTPLLPLALA). The tract at residues 134–166 (IKSSSPGPSSSFAAAATTEAPTSTRASPYTPYT) is disordered. Residues 136–166 (SSSPGPSSSFAAAATTEAPTSTRASPYTPYT) are compositionally biased toward low complexity. Cys173 and Cys188 are oxidised to a cystine. Asn240 carries N-linked (GlcNAc...) asparagine glycosylation. PbH1 repeat units follow at residues 280-302 (VYNS…DIEN), 303-341 (TESL…DIKS), 342-363 (STDL…AITS), 364-384 (GTNI…SIGS), 393-414 (VDGV…RIKT), 422-444 (VSNI…VVQQ), and 456-500 (SNGV…SITG). The segment at 312–335 (TLDNSAGDEPNDSSDGDPAAHNSD) is disordered. N-linked (GlcNAc...) asparagine glycosylation is present at Asn322. Asp356 serves as the catalytic Proton donor. A disulfide bond links Cys358 and Cys374. Asn366 is a glycosylation site (N-linked (GlcNAc...) asparagine). Residue His378 is part of the active site. A glycan (N-linked (GlcNAc...) asparagine) is linked at Asn429. Cys483 and Cys488 are disulfide-bonded. An N-linked (GlcNAc...) asparagine glycan is attached at Asn490. Cys506 and Cys513 are oxidised to a cystine.

This sequence belongs to the glycosyl hydrolase 28 family.

It is found in the secreted. The enzyme catalyses (1,4-alpha-D-galacturonosyl)n+m + H2O = (1,4-alpha-D-galacturonosyl)n + (1,4-alpha-D-galacturonosyl)m.. Involved in maceration and soft-rotting of plant tissue. Hydrolyzes the 1,4-alpha glycosidic bonds of de-esterified pectate in the smooth region of the plant cell wall. This chain is Probable endopolygalacturonase D (pgaD), found in Emericella nidulans (strain FGSC A4 / ATCC 38163 / CBS 112.46 / NRRL 194 / M139) (Aspergillus nidulans).